The primary structure comprises 408 residues: Multifunctional CCA protein (408 aa).

Residues glycine 8 and arginine 11 each contribute to the ATP site. The CTP site is built by glycine 8 and arginine 11. Positions 21 and 23 each coordinate Mg(2+). ATP is bound by residues arginine 91, arginine 137, and arginine 140. Residues arginine 91, arginine 137, and arginine 140 each coordinate CTP. Residues 228–329 form the HD domain; the sequence is SGVHTLMVLE…VKLFDKADFW (102 aa).

It belongs to the tRNA nucleotidyltransferase/poly(A) polymerase family. Bacterial CCA-adding enzyme type 1 subfamily. Monomer. Can also form homodimers and oligomers. Requires Mg(2+) as cofactor. Ni(2+) is required as a cofactor.

It carries out the reaction a tRNA precursor + 2 CTP + ATP = a tRNA with a 3' CCA end + 3 diphosphate. The enzyme catalyses a tRNA with a 3' CCA end + 2 CTP + ATP = a tRNA with a 3' CCACCA end + 3 diphosphate. Functionally, catalyzes the addition and repair of the essential 3'-terminal CCA sequence in tRNAs without using a nucleic acid template. Adds these three nucleotides in the order of C, C, and A to the tRNA nucleotide-73, using CTP and ATP as substrates and producing inorganic pyrophosphate. tRNA 3'-terminal CCA addition is required both for tRNA processing and repair. Also involved in tRNA surveillance by mediating tandem CCA addition to generate a CCACCA at the 3' terminus of unstable tRNAs. While stable tRNAs receive only 3'-terminal CCA, unstable tRNAs are marked with CCACCA and rapidly degraded. This Shewanella piezotolerans (strain WP3 / JCM 13877) protein is Multifunctional CCA protein.